The primary structure comprises 198 residues: Putative NADH dehydrogenase/NAD(P)H nitroreductase XOO4267 (198 aa).

Belongs to the nitroreductase family. HadB/RutE subfamily. FMN is required as a cofactor.

In Xanthomonas oryzae pv. oryzae (strain KACC10331 / KXO85), this protein is Putative NADH dehydrogenase/NAD(P)H nitroreductase XOO4267.